The primary structure comprises 377 residues: Cytochrome b (377 aa).

Transmembrane regions (helical) follow at residues 36–56, 80–102, 115–135, and 181–201; these read WGSL…FLAM, WLIR…LHMA, VWLI…MGYI, and FFVL…IHLI. Heme b is bound by residues His86 and His100. 2 residues coordinate heme b: His185 and His199. Residue His204 participates in a ubiquinone binding. The next 4 helical transmembrane spans lie at 227–247, 291–311, 326–346, and 354–374; these read YSSK…VIIF, LGGV…PFIS, LFWS…MPVV, and LTST…FLMI.

This sequence belongs to the cytochrome b family. As to quaternary structure, the main subunits of complex b-c1 are: cytochrome b, cytochrome c1 and the Rieske protein. Heme b serves as cofactor.

Its subcellular location is the mitochondrion inner membrane. Component of the ubiquinol-cytochrome c reductase complex (complex III or cytochrome b-c1 complex) that is part of the mitochondrial respiratory chain. The b-c1 complex mediates electron transfer from ubiquinol to cytochrome c. Contributes to the generation of a proton gradient across the mitochondrial membrane that is then used for ATP synthesis. The sequence is that of Cytochrome b (mt:Cyt-b) from Myzostoma seymourcollegiorum (Polychaete worm).